We begin with the raw amino-acid sequence, 408 residues long: Serine/threonine-protein kinase ATG1t (408 aa).

In terms of domain architecture, Protein kinase spans 7 to 272 (YIAKSKLSES…GRIKNSRVWV (266 aa)). Residues 13-21 (LSESLTSTV) and Lys36 each bind ATP. The active-site Proton acceptor is the Asp129.

This sequence belongs to the protein kinase superfamily. Ser/Thr protein kinase family.

It is found in the cytoplasmic vesicle. It localises to the autophagosome. In terms of biological role, serine/threonine protein kinase involved in autophagy. The ATG1-ATG13 protein kinase complex regulates downstream events required for autophagosome enclosure and/or vacuolar delivery. The chain is Serine/threonine-protein kinase ATG1t from Arabidopsis thaliana (Mouse-ear cress).